The chain runs to 1036 residues: Multidrug resistance protein MdtC (1036 aa).

10 consecutive transmembrane segments (helical) span residues 12-34, 336-353, 360-382, 431-450, 463-485, 528-547, 853-875, 895-917, 949-971, and 986-1008; these read VATTLLSLAITLCGVLGFTLLPV, RALVIAIGLVILVVFLFL, LIPAIAVPVSLIGTFTAMYLCGF, VGFTVLSMSISLVAVFIPLL, FAITLTTSISISLLVSLTLTPMM, WVLLILAGIIALNVWLYINI, LFLILAAIITVYLVLGILYESYI, LELFDTPFSLIALIGIMLLIGIV, LRFRPILMTTLAALFGSLPLVLS, and IVGGLVMSQLLTLYTTPVVYLCF.

The protein belongs to the resistance-nodulation-cell division (RND) (TC 2.A.6) family. MdtC subfamily. In terms of assembly, part of a tripartite efflux system composed of MdtA, MdtB and MdtC. MdtC forms a heteromultimer with MdtB.

Its subcellular location is the cell inner membrane. The chain is Multidrug resistance protein MdtC from Photorhabdus laumondii subsp. laumondii (strain DSM 15139 / CIP 105565 / TT01) (Photorhabdus luminescens subsp. laumondii).